We begin with the raw amino-acid sequence, 256 residues long: Protein YABBY 4 (256 aa).

The C4-type zinc finger occupies 30–57; that stretch reads CNCCDTILAVGVPCSSLFKTVTVRCGHC. The segment at 127 to 168 is disordered; that stretch reads SCASNAPAMQMPPAKPVQQEPELPKNAPASANRPPEKRQRVP.

Belongs to the YABBY family. Preferentially expressed in immature organs containing meristems and organ primordia. Expressed in phloem of developing vascular tissues of young seedling shoots. Expressed in the phloem of midvein vasculature of young leaves. Does not show polar expression pattern in leaf primordia.

The protein localises to the nucleus. Functionally, seems to be associated with phloem cell differentiation. The protein is Protein YABBY 4 (YAB4) of Oryza sativa subsp. japonica (Rice).